The primary structure comprises 215 residues: Large ribosomal subunit protein uL3 (215 aa).

Residues 131–144 (SSSRASHGNSRSHN) show a composition bias toward low complexity. The tract at residues 131–150 (SSSRASHGNSRSHNVPGSIG) is disordered. Gln-153 is modified (N5-methylglutamine).

The protein belongs to the universal ribosomal protein uL3 family. As to quaternary structure, part of the 50S ribosomal subunit. Forms a cluster with proteins L14 and L19. In terms of processing, methylated by PrmB.

Functionally, one of the primary rRNA binding proteins, it binds directly near the 3'-end of the 23S rRNA, where it nucleates assembly of the 50S subunit. This chain is Large ribosomal subunit protein uL3, found in Nitrosomonas europaea (strain ATCC 19718 / CIP 103999 / KCTC 2705 / NBRC 14298).